We begin with the raw amino-acid sequence, 456 residues long: Phosphomethylpyrimidine synthase (456 aa).

Substrate is bound by residues Asn80, Met109, Tyr139, His175, 195-197 (SRG), 236-239 (DSLR), and Glu275. Residue His279 coordinates Zn(2+). Residue Tyr302 participates in substrate binding. His343 provides a ligand contact to Zn(2+). [4Fe-4S] cluster contacts are provided by Cys423, Cys426, and Cys431.

It belongs to the ThiC family. [4Fe-4S] cluster is required as a cofactor.

The enzyme catalyses 5-amino-1-(5-phospho-beta-D-ribosyl)imidazole + S-adenosyl-L-methionine = 4-amino-2-methyl-5-(phosphooxymethyl)pyrimidine + CO + 5'-deoxyadenosine + formate + L-methionine + 3 H(+). Its pathway is cofactor biosynthesis; thiamine diphosphate biosynthesis. Functionally, catalyzes the synthesis of the hydroxymethylpyrimidine phosphate (HMP-P) moiety of thiamine from aminoimidazole ribotide (AIR) in a radical S-adenosyl-L-methionine (SAM)-dependent reaction. The sequence is that of Phosphomethylpyrimidine synthase from Prochlorococcus marinus subsp. pastoris (strain CCMP1986 / NIES-2087 / MED4).